We begin with the raw amino-acid sequence, 318 residues long: Ribosomal RNA small subunit methyltransferase H (318 aa).

S-adenosyl-L-methionine-binding positions include 35 to 37 (GGH), Asp54, Phe83, Asp104, and Gln111.

Belongs to the methyltransferase superfamily. RsmH family.

It localises to the cytoplasm. The enzyme catalyses cytidine(1402) in 16S rRNA + S-adenosyl-L-methionine = N(4)-methylcytidine(1402) in 16S rRNA + S-adenosyl-L-homocysteine + H(+). Functionally, specifically methylates the N4 position of cytidine in position 1402 (C1402) of 16S rRNA. In Latilactobacillus sakei subsp. sakei (strain 23K) (Lactobacillus sakei subsp. sakei), this protein is Ribosomal RNA small subunit methyltransferase H.